The primary structure comprises 80 residues: MMSKLGVLLTICLLLFPLFALPQDGDQPADRPAERMQDDLSSEQHPLFEKRIVDRCCNKGNGKRGCSRWCRDHSRCCGRR.

The signal sequence occupies residues 1–22; the sequence is MMSKLGVLLTICLLLFPLFALP. Positions 23-51 are excised as a propeptide; the sequence is QDGDQPADRPAERMQDDLSSEQHPLFEKR. Cystine bridges form between cysteine 56-cysteine 70, cysteine 57-cysteine 76, and cysteine 66-cysteine 77. Cysteine 77 bears the Cysteine amide mark.

The protein belongs to the conotoxin M superfamily. Expressed by the venom duct.

Its subcellular location is the secreted. Functionally, mu-conotoxins block voltage-gated sodium channels. Extremely potent inhibitor of Nav1.4/SCN4A (96% inhibition at 1 uM). The inhibition is very slowly reversible. The chain is Mu-conotoxin BuIIIC from Conus bullatus (Bubble cone).